A 579-amino-acid chain; its full sequence is Moesin a (579 aa).

Positions 5-295 (ISVRVTTMDA…GNHELYMRRR (291 aa)) constitute an FERM domain. The stretch at 306-448 (KAQAKEEKNH…EDEALEWQTK (143 aa)) forms a coiled coil. Disordered stretches follow at residues 308-341 (QAKE…EKIE), 376-418 (EQER…EHLA), and 464-519 (KNKV…KNER). The span at 376-400 (EQERKRAQEEAERLERERRLAEEAK) shows a compositional bias: basic and acidic residues. Residues 490 to 501 (AEASAELTSAAA) are compositionally biased toward low complexity. Over residues 502–519 (YKDRSEEERMTEAEKNER) the composition is skewed to basic and acidic residues. The stretch at 517-551 (NERVQKHLLALTSELANARDETKKTQNDIIHAENV) forms a coiled coil.

The protein resides in the cell membrane. Its subcellular location is the cell junction. In terms of biological role, positively regulates endothelial adherens junction formation and stabilization. Is thereby required for intersegmental vessel luminal membrane formation and stabilization during tubulogenesis in the early stages of development, independent of blood flow dynamics. The chain is Moesin a from Danio rerio (Zebrafish).